The following is a 446-amino-acid chain: Transcriptional adapter 2-alpha (446 aa).

Residues 12 to 69 (FDKPPCRGCSSYLTEPYVKCAECGPPPFLLCLQCFTRGFEYKKHQSDHTYEIMTSDFP) form a ZZ-type zinc finger. Zn(2+) contacts are provided by cysteine 17, cysteine 20, cysteine 31, cysteine 34, cysteine 42, cysteine 45, histidine 55, and histidine 59. The SANT domain occupies 70 to 122 (VLDPNWTAQEEMALLEAVMDCGFGNWQDVANQMCTKSKEECEKHYMKHFINNP). Residues 345-375 (DIDSGPTPAAPIPSNSGRRSAPPLNLTGLPG) form a disordered region. The region spanning 359 to 446 (NSGRRSAPPL…LIREGYITKA (88 aa)) is the SWIRM domain. A DNA-binding region spans residues 429–438 (KTRKIYDFLI).

The protein resides in the nucleus. The protein localises to the chromosome. In terms of biological role, component of some complex with histone acetyltransferase activity. Required for the function of some acidic activation domains, which activate transcription from a distant site. Binds double-stranded DNA. Binds dinucleosomes, probably at the linker region between neighboring nucleosomes. Plays a role in chromatin remodeling. The sequence is that of Transcriptional adapter 2-alpha (TADA2A) from Gallus gallus (Chicken).